We begin with the raw amino-acid sequence, 542 residues long: Chaperonin GroEL 2 (542 aa).

ATP-binding positions include 30 to 33, Lys51, 87 to 91, Gly415, and Asp496; these read TLGP and DGTTT.

It belongs to the chaperonin (HSP60) family. Forms a cylinder of 14 subunits composed of two heptameric rings stacked back-to-back. Interacts with the co-chaperonin GroES.

Its subcellular location is the cytoplasm. It catalyses the reaction ATP + H2O + a folded polypeptide = ADP + phosphate + an unfolded polypeptide.. In terms of biological role, together with its co-chaperonin GroES, plays an essential role in assisting protein folding. The GroEL-GroES system forms a nano-cage that allows encapsulation of the non-native substrate proteins and provides a physical environment optimized to promote and accelerate protein folding. This Cereibacter sphaeroides (strain ATCC 17023 / DSM 158 / JCM 6121 / CCUG 31486 / LMG 2827 / NBRC 12203 / NCIMB 8253 / ATH 2.4.1.) (Rhodobacter sphaeroides) protein is Chaperonin GroEL 2.